Reading from the N-terminus, the 189-residue chain is Threonylcarbamoyl-AMP synthase (189 aa).

A YrdC-like domain is found at 9-189 (ASAQRKLSVY…IDGETGKRLR (181 aa)).

It belongs to the SUA5 family. TsaC subfamily.

It is found in the cytoplasm. The catalysed reaction is L-threonine + hydrogencarbonate + ATP = L-threonylcarbamoyladenylate + diphosphate + H2O. Its function is as follows. Required for the formation of a threonylcarbamoyl group on adenosine at position 37 (t(6)A37) in tRNAs that read codons beginning with adenine. Catalyzes the conversion of L-threonine, HCO(3)(-)/CO(2) and ATP to give threonylcarbamoyl-AMP (TC-AMP) as the acyladenylate intermediate, with the release of diphosphate. In Neisseria gonorrhoeae (strain ATCC 700825 / FA 1090), this protein is Threonylcarbamoyl-AMP synthase.